We begin with the raw amino-acid sequence, 485 residues long: Auxin transporter protein 1 (485 aa).

Residues 1-59 (MSEGVEAIVANDNGTDQVNGNRTGKDNEEHDGSTGSNLSNFLWHGGSVWDAWFSCASNQ) lie on the Cytoplasmic side of the membrane. The span at 12–22 (DNGTDQVNGNR) shows a compositional bias: polar residues. Residues 12–33 (DNGTDQVNGNRTGKDNEEHDGS) form a disordered region. A compositionally biased stretch (basic and acidic residues) spans 23 to 32 (TGKDNEEHDG). Residues 60–77 (VAQVLLTLPYSFSQLGML) traverse the membrane as a helical segment. Residues 78-79 (SG) are Extracellular-facing. Residues 80-100 (IVLQIFYGLLGSWTAYLISVL) form a helical membrane-spanning segment. Topologically, residues 101–135 (YVEYRARKEKEGKSFKNHVIQWFEVLDGLLGSYWK) are cytoplasmic. The helical transmembrane segment at 136 to 156 (ALGLAFNCTFLLFGSVIQLIA) threads the bilayer. At 157–172 (CASNIYYINDHLDKRT) the chain is on the extracellular side. A helical membrane pass occupies residues 173–193 (WTYIFGACCATTVFIPSFHNY). Over 194–196 (RIW) the chain is Cytoplasmic. A helical membrane pass occupies residues 197-217 (SFLGLGMTTYTAWYLAIASII). The Extracellular segment spans residues 218-232 (HGQAEGVKHSGPTKL). A helical transmembrane segment spans residues 233–253 (VLYFTGATNILYTFGGHAVTV). The Cytoplasmic portion of the chain corresponds to 254-266 (EIMHAMWKPQKFK). Residues 267–287 (YIYLMATLYVFTLTIPSAAAV) traverse the membrane as a helical segment. The Extracellular segment spans residues 288–314 (YWAFGDALLDHSNAFSLMPKNAWRDAA). A helical membrane pass occupies residues 315–335 (VILMLIHQFITFGFACTPLYF). Over 336-356 (VWEKVIGMHDTKSICLRALAR) the chain is Cytoplasmic. A helical transmembrane segment spans residues 357–377 (LPVVIPIWFLAIIFPFFGPIN). A topological domain (extracellular) is located at residue serine 378. A helical transmembrane segment spans residues 379-399 (AVGALLVSFTVYIIPSLAHML). Residues 400–425 (TYRSASARQNAAEKPPFFMPSWTAMY) lie on the Cytoplasmic side of the membrane. A helical transmembrane segment spans residues 426 to 446 (VLNAFVVVWVLIVGFGFGGWA). Residues 447-485 (SVTNFVRQVDTFGLFAKCYQCKPAAAAAHAPVSALHHRL) are Extracellular-facing.

It belongs to the amino acid/polyamine transporter 2 family. Amino acid/auxin permease (AAAP) (TC 2.A.18.1) subfamily. As to expression, expressed in root and shoot apical tissues. In root apex, confined to stele initials, protophloem poles, statolith-containing S2 columella cells, lateral root cap cells (LRC), and in epidermal cells from the distal elongation zone (DEZ) up to central elongation zone (CEZ).

The protein resides in the cell membrane. With respect to regulation, auxin uptake mediated by AUX1 is inhibited by chromosaponin-1 (CSI), 1-naphthoxyacetic acid (1-NOA) and 3-chloro-4-hydroxyphenylacetic acid (CHPAA). In terms of biological role, carrier protein involved in proton-driven auxin influx. Mediates the formation of auxin gradient from developing leaves (site of auxin biosynthesis) to tips by contributing to the loading of auxin in vascular tissues and facilitating acropetal (base to tip) auxin transport within inner tissues of the root apex, and basipetal (tip to base) auxin transport within outer tissues of the root apex. Unloads auxin from the mature phloem to deliver the hormone to the root meristem via the protophloem cell files. Coordinated subcellular localization of AUX1 is regulated by a brefeldin A-sensitive (BFA) vesicle trafficking process. Involved in lateral root formation, trichoblast polarization and root hair elongation. Required for gravitropism and thigmotropism, especially in roots, by modulating responses to auxin, ethylene and cytokinins such as benzyladenine (BA). Needed for ammonium-mediated root-growth inhibition. Confers sensitivity to the herbicide 2,4-dichlorophenoxyacetic acid (2,4-D, auxin analog), and to polar auxin transport inhibitors such as N-1-naphthylphthalamic acid (NPA) and 2,3,5-triiodobenzoic acid (TIBA). The protein is Auxin transporter protein 1 (AUX1) of Arabidopsis thaliana (Mouse-ear cress).